A 337-amino-acid chain; its full sequence is MIQQALTRLLDRHDLARAEMSAVMDEIADGGATPAQVGAFLAALRLKGETVEEIAGAAEVMRARVDPIRVDRDVFVDTCGTGGDGRHTFNISTTAAFIVAGAGVTVAKHGNRAVSSRSGSADVLAALGVDVDAAKDVVERAIEEVGIGFLFAPRLHPAFKAVAGIRRELGVRTVFNLLGPLANPAGARYQVLGVYEPRWVPILGGVLAALGAAHAFVVHGEGLDEIAVTGMTHVCEVRAGECERYAMVPEDLGLRRHEEAEIAGGDADRNARILADVLAGQQGGPRDAALANAAAALVAAGAAADLREGVRLGAEAVDRGAASDKLARLVAVTRGGA.

5-phospho-alpha-D-ribose 1-diphosphate contacts are provided by residues Gly-80, 83–84, Thr-88, 90–93, 108–116, and Ser-120; these read GD, NIST, and KHGNRAVSS. Gly-80 serves as a coordination point for anthranilate. Ser-92 provides a ligand contact to Mg(2+). Asn-111 is an anthranilate binding site. Position 166 (Arg-166) interacts with anthranilate. 2 residues coordinate Mg(2+): Asp-224 and Glu-225.

It belongs to the anthranilate phosphoribosyltransferase family. Homodimer. Mg(2+) is required as a cofactor.

It catalyses the reaction N-(5-phospho-beta-D-ribosyl)anthranilate + diphosphate = 5-phospho-alpha-D-ribose 1-diphosphate + anthranilate. Its pathway is amino-acid biosynthesis; L-tryptophan biosynthesis; L-tryptophan from chorismate: step 2/5. Its function is as follows. Catalyzes the transfer of the phosphoribosyl group of 5-phosphorylribose-1-pyrophosphate (PRPP) to anthranilate to yield N-(5'-phosphoribosyl)-anthranilate (PRA). This Anaeromyxobacter sp. (strain Fw109-5) protein is Anthranilate phosphoribosyltransferase.